The primary structure comprises 99 residues: Aspartyl/glutamyl-tRNA(Asn/Gln) amidotransferase subunit C (99 aa).

Belongs to the GatC family. Heterotrimer of A, B and C subunits.

It catalyses the reaction L-glutamyl-tRNA(Gln) + L-glutamine + ATP + H2O = L-glutaminyl-tRNA(Gln) + L-glutamate + ADP + phosphate + H(+). The catalysed reaction is L-aspartyl-tRNA(Asn) + L-glutamine + ATP + H2O = L-asparaginyl-tRNA(Asn) + L-glutamate + ADP + phosphate + 2 H(+). In terms of biological role, allows the formation of correctly charged Asn-tRNA(Asn) or Gln-tRNA(Gln) through the transamidation of misacylated Asp-tRNA(Asn) or Glu-tRNA(Gln) in organisms which lack either or both of asparaginyl-tRNA or glutaminyl-tRNA synthetases. The reaction takes place in the presence of glutamine and ATP through an activated phospho-Asp-tRNA(Asn) or phospho-Glu-tRNA(Gln). The sequence is that of Aspartyl/glutamyl-tRNA(Asn/Gln) amidotransferase subunit C from Albidiferax ferrireducens (strain ATCC BAA-621 / DSM 15236 / T118) (Rhodoferax ferrireducens).